A 503-amino-acid polypeptide reads, in one-letter code: Na(+)-translocating NADH-quinone reductase subunit B (503 aa).

5 consecutive transmembrane segments (helical) span residues M55–V75, I94–L114, I120–A140, T161–V181, and F186–F206. T248 is subject to FMN phosphoryl threonine. 5 helical membrane-spanning segments follow: residues T361 to W381, F387 to G407, F417 to M437, W452 to Y472, and G475 to V495.

This sequence belongs to the NqrB/RnfD family. In terms of assembly, composed of six subunits; NqrA, NqrB, NqrC, NqrD, NqrE and NqrF. Requires FMN as cofactor.

It localises to the cell inner membrane. The catalysed reaction is a ubiquinone + n Na(+)(in) + NADH + H(+) = a ubiquinol + n Na(+)(out) + NAD(+). Functionally, NQR complex catalyzes the reduction of ubiquinone-1 to ubiquinol by two successive reactions, coupled with the transport of Na(+) ions from the cytoplasm to the periplasm. NqrA to NqrE are probably involved in the second step, the conversion of ubisemiquinone to ubiquinol. The sequence is that of Na(+)-translocating NADH-quinone reductase subunit B from Chlamydia caviae (strain ATCC VR-813 / DSM 19441 / 03DC25 / GPIC) (Chlamydophila caviae).